Consider the following 393-residue polypeptide: uncharacterized protein (393 aa).

Transmembrane regions (helical) follow at residues 15 to 35, 56 to 76, 86 to 106, 131 to 151, 176 to 196, 253 to 273, 289 to 309, and 349 to 369; these read IVAF…VTIF, WGWI…NVII, FYAS…FQIV, AVLI…LITW, LSLT…VIAF, LLAN…VFMI, LIDL…IPVA, and VYLP…QVIW.

It is found in the cell membrane. This is an uncharacterized protein from Mycoplasma genitalium (strain ATCC 33530 / DSM 19775 / NCTC 10195 / G37) (Mycoplasmoides genitalium).